The primary structure comprises 218 residues: Peptide methionine sulfoxide reductase MsrA (218 aa).

Cys57 is a catalytic residue.

The protein belongs to the MsrA Met sulfoxide reductase family.

The catalysed reaction is L-methionyl-[protein] + [thioredoxin]-disulfide + H2O = L-methionyl-(S)-S-oxide-[protein] + [thioredoxin]-dithiol. It catalyses the reaction [thioredoxin]-disulfide + L-methionine + H2O = L-methionine (S)-S-oxide + [thioredoxin]-dithiol. Has an important function as a repair enzyme for proteins that have been inactivated by oxidation. Catalyzes the reversible oxidation-reduction of methionine sulfoxide in proteins to methionine. In Brucella abortus (strain S19), this protein is Peptide methionine sulfoxide reductase MsrA.